Here is a 409-residue protein sequence, read N- to C-terminus: MARSRCVHRVVHQAACIGVIGLSTSALTTCDFTGIFVAIQSEVPIKTPSIPGAIYGLVKAGSKLYATNGQLWKKNVAEEGKDWERESCFDSVIGDSRITSLAADNGENGVLVACILGKGAYKWSQGSADQTSGNPSALSGTEKALSVVGTGTSCVYLNHTDDKVGETSSSESGGMTASGETNEFCLHAGNGFLVTTKKVCVGSDGSPVAKSDGEEPVPPILAATDDGSGHVYILTKDKVYCKKVNQSEGKIQDCPQSAAAAPEPTGAHSVAHKVADAHSIAFFKNGSDEFLLIGGRQGYGEIKLERGSGSNGNGAQCVHLKEENVHDQTGWHEKGSTPKGSAEQYRSTIGRWAVSGIYVIKKSTSGGRGKRSTSTDCERPDLYVAVGDTNDTYTGLWRFDSAAQKWNRE.

An N-terminal signal peptide occupies residues 1–29 (MARSRCVHRVVHQAACIGVIGLSTSALTT). Residue C30 is the site of N-palmitoyl cysteine attachment. C30 is lipidated: S-diacylglycerol cysteine.

It belongs to the TP013X lipoprotein family.

It localises to the cell membrane. This is an uncharacterized protein from Treponema pallidum (strain Nichols).